The sequence spans 117 residues: Mitochondrial zinc maintenance protein 1, mitochondrial (117 aa).

The transit peptide at 1–10 directs the protein to the mitochondrion; the sequence is MSSVLSAYRN. The interval 98–117 is disordered; that stretch reads RKEMGSLAGKKGSSIKSCND.

The protein belongs to the complex I LYR family. MZM1 subfamily. As to quaternary structure, interacts with RIP1.

It localises to the mitochondrion matrix. Assembly factor required for Rieske Fe-S protein RIP1 incorporation into the cytochrome b-c1 (CIII) complex. Functions as a chaperone, binding to this subunit within the mitochondrial matrix and stabilizing it prior to its translocation and insertion into the late CIII dimeric intermediate within the mitochondrial inner membrane. Modulates the mitochondrial matrix zinc pool. The sequence is that of Mitochondrial zinc maintenance protein 1, mitochondrial (MZM1) from Candida albicans (strain SC5314 / ATCC MYA-2876) (Yeast).